A 160-amino-acid polypeptide reads, in one-letter code: Large ribosomal subunit protein uL22c (160 aa).

This sequence belongs to the universal ribosomal protein uL22 family. As to quaternary structure, part of the 50S ribosomal subunit.

The protein resides in the plastid. Its subcellular location is the chloroplast. Functionally, this protein binds specifically to 23S rRNA. Its function is as follows. The globular domain of the protein is located near the polypeptide exit tunnel on the outside of the subunit, while an extended beta-hairpin is found that lines the wall of the exit tunnel in the center of the 70S ribosome. This chain is Large ribosomal subunit protein uL22c (rpl22), found in Lepidium virginicum (Virginia pepperweed).